A 99-amino-acid polypeptide reads, in one-letter code: Nucleoid-associated protein SUB1611 (99 aa).

The protein belongs to the YbaB/EbfC family. As to quaternary structure, homodimer.

It localises to the cytoplasm. The protein resides in the nucleoid. Its function is as follows. Binds to DNA and alters its conformation. May be involved in regulation of gene expression, nucleoid organization and DNA protection. The protein is Nucleoid-associated protein SUB1611 of Streptococcus uberis (strain ATCC BAA-854 / 0140J).